The primary structure comprises 102 residues: Small ribosomal subunit protein uS10 (102 aa).

This sequence belongs to the universal ribosomal protein uS10 family. As to quaternary structure, part of the 30S ribosomal subunit.

Its function is as follows. Involved in the binding of tRNA to the ribosomes. The protein is Small ribosomal subunit protein uS10 of Mesoplasma florum (strain ATCC 33453 / NBRC 100688 / NCTC 11704 / L1) (Acholeplasma florum).